Reading from the N-terminus, the 342-residue chain is S-adenosylmethionine:tRNA ribosyltransferase-isomerase (342 aa).

This sequence belongs to the QueA family. As to quaternary structure, monomer.

It localises to the cytoplasm. It catalyses the reaction 7-aminomethyl-7-carbaguanosine(34) in tRNA + S-adenosyl-L-methionine = epoxyqueuosine(34) in tRNA + adenine + L-methionine + 2 H(+). The protein operates within tRNA modification; tRNA-queuosine biosynthesis. Its function is as follows. Transfers and isomerizes the ribose moiety from AdoMet to the 7-aminomethyl group of 7-deazaguanine (preQ1-tRNA) to give epoxyqueuosine (oQ-tRNA). The sequence is that of S-adenosylmethionine:tRNA ribosyltransferase-isomerase from Listeria monocytogenes serotype 4b (strain F2365).